We begin with the raw amino-acid sequence, 699 residues long: MNPSLCIAVAFACPLSALAASGAPGVGFNEKPSFLGEIVQRSVDGVSDDLLTAGLGRDGIQSATPPLVSASPTATELRRLAIYNNYRALVDTTSGGGFGSLFGPLIAVDAGGRVSAPGDGKIAGTEYLAYAIDRGDDSKVTLMVQVPAHFNPKAPCIVTGTSSGSRGIYGAIGTSGEWGLQKGCAVAYADKGTGNGMHDLDTNTVGLIDGTRADAVAAGVASHFTADLTEAERTQFLASWPHRVAVKHAHSRANPEAHWGQDTLDAVRFAFFVLNETYGRRTPRGIVRTILPPNTVVIASSVSNGGGAALAAAEQDDERLIDGVAVGEPQIQLRENDAVRVVRGSQVRTGTGRPLYDYTTFANLLQPCAVLSPRAAGSPGEAFIPAALAANRCEALAAHEFITGNTPAERGDSALDALVAYGWEPESTPLTASHYAFAVPPIALTYANAYGRFGVEERVCNYSFAATDAAGTPIAWPAASAATSFGTGNGIPPAAGLQIINDASLGGPRRDGASISPSTGKLDFNVDGALCLRQLWTGGGASAREVHESVDEVQVSAQLQGRPAIIVHGRADALVPVGFTSRPYLGLNSLAEHGRSRLRYVEVTNAQHFDAFIGTATLPGYDTRFVPLHVYFRQALDLMYSHLTARTPLPPSQLVRTTPRAGTPGAAVAITAANVPPIRMKPAAADLITVRRGEVVVPD.

The first 19 residues, 1-19 (MNPSLCIAVAFACPLSALA), serve as a signal peptide directing secretion. Ser-303 acts as the Charge relay system in catalysis.

The protein belongs to the D-(-)-3-hydroxybutyrate oligomer hydrolase family.

It is found in the secreted. The catalysed reaction is (3R)-hydroxybutanoate dimer + H2O = 2 (R)-3-hydroxybutanoate + H(+). It participates in lipid metabolism; butanoate metabolism. Its function is as follows. Participates in the degradation of poly-3-hydroxybutyrate (PHB). It works downstream of poly(3-hydroxybutyrate) depolymerase, hydrolyzing D(-)-3-hydroxybutyrate oligomers of various length (3HB-oligomers) into 3HB-monomers. In Azoarcus sp. (strain BH72), this protein is D-(-)-3-hydroxybutyrate oligomer hydrolase.